The chain runs to 666 residues: Threonine--tRNA ligase (666 aa).

Residues 7 to 70 (QQVTLTVTLP…TADCTAEIIT (64 aa)) enclose the TGS domain. A catalytic region spans residues 253-555 (DHRKLGTELE…LIEHTAGNFP (303 aa)). Cysteine 351, histidine 402, and histidine 532 together coordinate Zn(2+).

The protein belongs to the class-II aminoacyl-tRNA synthetase family. As to quaternary structure, homodimer. Zn(2+) serves as cofactor.

It is found in the cytoplasm. The catalysed reaction is tRNA(Thr) + L-threonine + ATP = L-threonyl-tRNA(Thr) + AMP + diphosphate + H(+). Catalyzes the attachment of threonine to tRNA(Thr) in a two-step reaction: L-threonine is first activated by ATP to form Thr-AMP and then transferred to the acceptor end of tRNA(Thr). Also edits incorrectly charged L-seryl-tRNA(Thr). This Chlorobium phaeovibrioides (strain DSM 265 / 1930) (Prosthecochloris vibrioformis (strain DSM 265)) protein is Threonine--tRNA ligase.